We begin with the raw amino-acid sequence, 196 residues long: Pentatricopeptide repeat-containing protein At1g62350 (196 aa).

2 PPR repeats span residues 70–104 and 105–139; these read DMFF…EVLF and DQHT…PDRP.

It belongs to the PPR family. P subfamily.

The protein is Pentatricopeptide repeat-containing protein At1g62350 of Arabidopsis thaliana (Mouse-ear cress).